The following is a 75-amino-acid chain: Protein P8 (75 aa).

Residues 19–47 (PMGGMPSIASSSSAETGQQTQSGNFTGGG) form a disordered region. A compositionally biased stretch (polar residues) spans 26–39 (IASSSSAETGQQTQ). Residues 55-72 (NNQLLIVGAVVIGLFLVI) traverse the membrane as a helical segment.

It is found in the virion membrane. The protein is Protein P8 (VIII) of Pseudoalteromonas phage PM2 (Bacteriophage PM2).